A 318-amino-acid polypeptide reads, in one-letter code: Methionyl-tRNA formyltransferase (318 aa).

S110–P113 lines the (6S)-5,6,7,8-tetrahydrofolate pocket.

It belongs to the Fmt family.

It catalyses the reaction L-methionyl-tRNA(fMet) + (6R)-10-formyltetrahydrofolate = N-formyl-L-methionyl-tRNA(fMet) + (6S)-5,6,7,8-tetrahydrofolate + H(+). In terms of biological role, attaches a formyl group to the free amino group of methionyl-tRNA(fMet). The formyl group appears to play a dual role in the initiator identity of N-formylmethionyl-tRNA by promoting its recognition by IF2 and preventing the misappropriation of this tRNA by the elongation apparatus. The polypeptide is Methionyl-tRNA formyltransferase (Lacticaseibacillus casei (strain BL23) (Lactobacillus casei)).